The primary structure comprises 306 residues: Serine/threonine-protein kinase csk1 (306 aa).

A Protein kinase domain is found at 11–306; the sequence is LTDIRHLTDG…KVSARLSQYA (296 aa). ATP is bound by residues 17–25 and lysine 40; that span reads LTDGTISEV. Catalysis depends on aspartate 129, which acts as the Proton acceptor.

Belongs to the protein kinase superfamily. CMGC Ser/Thr protein kinase family. CDC2/CDKX subfamily.

The catalysed reaction is L-seryl-[protein] + ATP = O-phospho-L-seryl-[protein] + ADP + H(+). It catalyses the reaction L-threonyl-[protein] + ATP = O-phospho-L-threonyl-[protein] + ADP + H(+). In terms of biological role, acts as a CAK-activating kinase that specifically activates crk1 of the crk1-mcs2 CAK complex. The protein is Serine/threonine-protein kinase csk1 (csk1) of Schizosaccharomyces pombe (strain 972 / ATCC 24843) (Fission yeast).